Reading from the N-terminus, the 172-residue chain is Large ribosomal subunit protein uL10 (172 aa).

The protein belongs to the universal ribosomal protein uL10 family. As to quaternary structure, part of the ribosomal stalk of the 50S ribosomal subunit. The N-terminus interacts with L11 and the large rRNA to form the base of the stalk. The C-terminus forms an elongated spine to which L12 dimers bind in a sequential fashion forming a multimeric L10(L12)X complex.

Functionally, forms part of the ribosomal stalk, playing a central role in the interaction of the ribosome with GTP-bound translation factors. The protein is Large ribosomal subunit protein uL10 of Nitrobacter hamburgensis (strain DSM 10229 / NCIMB 13809 / X14).